Reading from the N-terminus, the 341-residue chain is tRNA N6-adenosine threonylcarbamoyltransferase (341 aa).

Positions 114 and 118 each coordinate Fe cation. Substrate is bound by residues 136 to 140 (LVSGG), aspartate 169, glycine 182, aspartate 186, and asparagine 278. Aspartate 304 lines the Fe cation pocket.

It belongs to the KAE1 / TsaD family. Fe(2+) is required as a cofactor.

Its subcellular location is the cytoplasm. It carries out the reaction L-threonylcarbamoyladenylate + adenosine(37) in tRNA = N(6)-L-threonylcarbamoyladenosine(37) in tRNA + AMP + H(+). In terms of biological role, required for the formation of a threonylcarbamoyl group on adenosine at position 37 (t(6)A37) in tRNAs that read codons beginning with adenine. Is involved in the transfer of the threonylcarbamoyl moiety of threonylcarbamoyl-AMP (TC-AMP) to the N6 group of A37, together with TsaE and TsaB. TsaD likely plays a direct catalytic role in this reaction. This Lactococcus lactis subsp. cremoris (strain MG1363) protein is tRNA N6-adenosine threonylcarbamoyltransferase.